A 316-amino-acid chain; its full sequence is Ornithine carbamoyltransferase (316 aa).

Residues 57–60 (STRT), Gln-84, Arg-108, and 135–138 (HPCQ) contribute to the carbamoyl phosphate site. L-ornithine-binding positions include Asn-166, Asp-230, and 234 to 235 (SM). Residues 269–270 (CL) and Arg-297 contribute to the carbamoyl phosphate site.

Belongs to the aspartate/ornithine carbamoyltransferase superfamily. OTCase family.

The protein localises to the cytoplasm. It catalyses the reaction carbamoyl phosphate + L-ornithine = L-citrulline + phosphate + H(+). The protein operates within amino-acid biosynthesis; L-arginine biosynthesis; L-arginine from L-ornithine and carbamoyl phosphate: step 1/3. In terms of biological role, reversibly catalyzes the transfer of the carbamoyl group from carbamoyl phosphate (CP) to the N(epsilon) atom of ornithine (ORN) to produce L-citrulline. The polypeptide is Ornithine carbamoyltransferase (Bacillus thuringiensis subsp. konkukian (strain 97-27)).